Here is a 345-residue protein sequence, read N- to C-terminus: 3-isopropylmalate dehydrogenase (345 aa).

74–87 (GPKWDGLPRKIRPE) contributes to the NAD(+) binding site. Positions 94, 104, 132, and 217 each coordinate substrate. Positions 217, 241, and 245 each coordinate Mg(2+). 274–286 (GSAPDIAGKGIAN) is a binding site for NAD(+).

This sequence belongs to the isocitrate and isopropylmalate dehydrogenases family. LeuB type 1 subfamily. Homodimer. Mg(2+) serves as cofactor. The cofactor is Mn(2+).

It is found in the cytoplasm. The enzyme catalyses (2R,3S)-3-isopropylmalate + NAD(+) = 4-methyl-2-oxopentanoate + CO2 + NADH. It functions in the pathway amino-acid biosynthesis; L-leucine biosynthesis; L-leucine from 3-methyl-2-oxobutanoate: step 3/4. In terms of biological role, catalyzes the oxidation of 3-carboxy-2-hydroxy-4-methylpentanoate (3-isopropylmalate) to 3-carboxy-4-methyl-2-oxopentanoate. The product decarboxylates to 4-methyl-2 oxopentanoate. The sequence is that of 3-isopropylmalate dehydrogenase (leuB) from Thermus thermophilus (strain ATCC 27634 / DSM 579 / HB8).